The primary structure comprises 229 residues: Urease accessory protein UreF (229 aa).

This sequence belongs to the UreF family. In terms of assembly, ureD, UreF and UreG form a complex that acts as a GTP-hydrolysis-dependent molecular chaperone, activating the urease apoprotein by helping to assemble the nickel containing metallocenter of UreC. The UreE protein probably delivers the nickel.

Its subcellular location is the cytoplasm. In terms of biological role, required for maturation of urease via the functional incorporation of the urease nickel metallocenter. The chain is Urease accessory protein UreF from Staphylococcus epidermidis (strain ATCC 12228 / FDA PCI 1200).